Here is a 181-residue protein sequence, read N- to C-terminus: Dual-action ribosomal maturation protein DarP (181 aa).

The interval 1 to 24 is disordered; it reads MTGIKRPMSQYQDDNEWEDWGPSK.

The protein belongs to the DarP family.

Its subcellular location is the cytoplasm. Its function is as follows. Member of a network of 50S ribosomal subunit biogenesis factors which assembles along the 30S-50S interface, preventing incorrect 23S rRNA structures from forming. Promotes peptidyl transferase center (PTC) maturation. This Aeromonas hydrophila subsp. hydrophila (strain ATCC 7966 / DSM 30187 / BCRC 13018 / CCUG 14551 / JCM 1027 / KCTC 2358 / NCIMB 9240 / NCTC 8049) protein is Dual-action ribosomal maturation protein DarP.